The sequence spans 229 residues: Cytochrome c oxidase subunit 2 (229 aa).

Topologically, residues Met1–Ser14 are mitochondrial intermembrane. The chain crosses the membrane as a helical span at residues Pro15–Leu45. The Mitochondrial matrix portion of the chain corresponds to Leu46–Gln59. A helical membrane pass occupies residues Glu60–Met87. The Mitochondrial intermembrane portion of the chain corresponds to Asp88–Ser229. His161, Cys196, Glu198, Cys200, His204, and Met207 together coordinate Cu cation. Position 198 (Glu198) interacts with Mg(2+).

This sequence belongs to the cytochrome c oxidase subunit 2 family. In terms of assembly, component of the cytochrome c oxidase (complex IV, CIV), a multisubunit enzyme composed of 14 subunits. The complex is composed of a catalytic core of 3 subunits MT-CO1, MT-CO2 and MT-CO3, encoded in the mitochondrial DNA, and 11 supernumerary subunits COX4I, COX5A, COX5B, COX6A, COX6B, COX6C, COX7A, COX7B, COX7C, COX8 and NDUFA4, which are encoded in the nuclear genome. The complex exists as a monomer or a dimer and forms supercomplexes (SCs) in the inner mitochondrial membrane with NADH-ubiquinone oxidoreductase (complex I, CI) and ubiquinol-cytochrome c oxidoreductase (cytochrome b-c1 complex, complex III, CIII), resulting in different assemblies (supercomplex SCI(1)III(2)IV(1) and megacomplex MCI(2)III(2)IV(2)). Found in a complex with TMEM177, COA6, COX18, COX20, SCO1 and SCO2. Interacts with TMEM177 in a COX20-dependent manner. Interacts with COX20. Interacts with COX16. Cu cation is required as a cofactor.

It localises to the mitochondrion inner membrane. It carries out the reaction 4 Fe(II)-[cytochrome c] + O2 + 8 H(+)(in) = 4 Fe(III)-[cytochrome c] + 2 H2O + 4 H(+)(out). Its function is as follows. Component of the cytochrome c oxidase, the last enzyme in the mitochondrial electron transport chain which drives oxidative phosphorylation. The respiratory chain contains 3 multisubunit complexes succinate dehydrogenase (complex II, CII), ubiquinol-cytochrome c oxidoreductase (cytochrome b-c1 complex, complex III, CIII) and cytochrome c oxidase (complex IV, CIV), that cooperate to transfer electrons derived from NADH and succinate to molecular oxygen, creating an electrochemical gradient over the inner membrane that drives transmembrane transport and the ATP synthase. Cytochrome c oxidase is the component of the respiratory chain that catalyzes the reduction of oxygen to water. Electrons originating from reduced cytochrome c in the intermembrane space (IMS) are transferred via the dinuclear copper A center (CU(A)) of subunit 2 and heme A of subunit 1 to the active site in subunit 1, a binuclear center (BNC) formed by heme A3 and copper B (CU(B)). The BNC reduces molecular oxygen to 2 water molecules using 4 electrons from cytochrome c in the IMS and 4 protons from the mitochondrial matrix. The polypeptide is Cytochrome c oxidase subunit 2 (MT-CO2) (Alligator mississippiensis (American alligator)).